A 369-amino-acid polypeptide reads, in one-letter code: 2-aminoethylphosphonate--pyruvate transaminase (369 aa).

K193 bears the N6-(pyridoxal phosphate)lysine mark.

The protein belongs to the class-V pyridoxal-phosphate-dependent aminotransferase family. PhnW subfamily. Homodimer. Pyridoxal 5'-phosphate serves as cofactor.

The catalysed reaction is (2-aminoethyl)phosphonate + pyruvate = phosphonoacetaldehyde + L-alanine. In terms of biological role, involved in phosphonate degradation. The polypeptide is 2-aminoethylphosphonate--pyruvate transaminase (Burkholderia pseudomallei (strain K96243)).